A 203-amino-acid chain; its full sequence is V-type ATP synthase subunit D (203 aa).

It belongs to the V-ATPase D subunit family.

Functionally, produces ATP from ADP in the presence of a proton gradient across the membrane. This Streptococcus pneumoniae (strain Hungary19A-6) protein is V-type ATP synthase subunit D.